A 407-amino-acid chain; its full sequence is Protein ZNF365 (407 aa).

Residue Ser-16 is modified to Phosphoserine. Residues 26–51 (LRCPRCGDHTRFRSLSSLRAHLEFSH) form a C2H2-type; degenerate zinc finger. A Phosphoserine modification is found at Ser-138. Residues 169-297 (VEAVDRTIEK…QLEYYQSQQA (129 aa)) are a coiled coil. The residue at position 175 (Thr-175) is a Phosphothreonine. A disordered region spans residues 347–392 (LKKAKDDRASMQPAKAIHEQAESSRDLCRPPKKGELLGFGRKGNIR). The span at 362-381 (AIHEQAESSRDLCRPPKKGE) shows a compositional bias: basic and acidic residues. Ser-369 is subject to Phosphoserine.

In terms of assembly, homodimer. Interacts with NDE1 and NDEL1. Does not interact with TUBG1. Interacts with DISC1. Interacts with PARP1. Interacts with MCRS1. In terms of tissue distribution, isoform 1 is expressed in brain. Isoform 2 is expressed in placenta and at low level in lung and liver. Isoform 3 is expressed in kidney and pancreas. Isoform 1 is expressed exclusively in brain.

It is found in the cytoplasm. It localises to the cytoskeleton. The protein resides in the microtubule organizing center. The protein localises to the centrosome. Its function is as follows. Involved in the regulation of neurogenesis. Negatively regulates neurite outgrowth. Involved in the morphogenesis of basket cells in the somatosensory cortex during embryogenesis. Involved in the positive regulation of oligodendrocyte differentiation during postnatal growth. Involved in dendritic arborization, morphogenesis of spine density dendrite, and establishment of postsynaptic dendrite density in cortical pyramidal neurons. Involved in homologous recombination (HR) repair pathway. Required for proper resolution of DNA double-strand breaks (DSBs) by HR. Is required for recovery of stalled replication forks, and directly contributes to genomic stability. Interacts with PARP1 and mediates MRE11-dependent DNA end resection during replication fork recovery. Contributes to genomic stability by preventing telomere dysfunction. This chain is Protein ZNF365 (ZNF365), found in Homo sapiens (Human).